A 242-amino-acid chain; its full sequence is Peptidase E (242 aa).

Catalysis depends on charge relay system residues Ser123, Asp138, and His160.

The protein belongs to the peptidase S51 family.

The protein localises to the cytoplasm. The enzyme catalyses Dipeptidase E catalyzes the hydrolysis of dipeptides Asp-|-Xaa. It does not act on peptides with N-terminal Glu, Asn or Gln, nor does it cleave isoaspartyl peptides.. Its function is as follows. Hydrolyzes dipeptides containing N-terminal aspartate residues. May play a role in allowing the cell to use peptide aspartate to spare carbon otherwise required for the synthesis of the aspartate family of amino acids. This is Peptidase E from Nostoc sp. (strain PCC 7120 / SAG 25.82 / UTEX 2576).